We begin with the raw amino-acid sequence, 142 residues long: Ribosome-binding factor A (142 aa).

The span at 118 to 130 (DKAKQKQAGREDD) shows a compositional bias: basic and acidic residues. The tract at residues 118-142 (DKAKQKQAGREDDTPSVDEQEKDTD) is disordered. Residues 131 to 142 (TPSVDEQEKDTD) are compositionally biased toward acidic residues.

This sequence belongs to the RbfA family. In terms of assembly, monomer. Binds 30S ribosomal subunits, but not 50S ribosomal subunits or 70S ribosomes.

It localises to the cytoplasm. In terms of biological role, one of several proteins that assist in the late maturation steps of the functional core of the 30S ribosomal subunit. Associates with free 30S ribosomal subunits (but not with 30S subunits that are part of 70S ribosomes or polysomes). Required for efficient processing of 16S rRNA. May interact with the 5'-terminal helix region of 16S rRNA. The sequence is that of Ribosome-binding factor A from Shewanella denitrificans (strain OS217 / ATCC BAA-1090 / DSM 15013).